Reading from the N-terminus, the 120-residue chain is Putative B3 domain-containing protein At3g28853 (120 aa).

A DNA-binding region (TF-B3) is located at residues 19-120; that stretch reads INKRLTQSDV…DKSNEVFYII (102 aa).

The protein localises to the nucleus. This chain is Putative B3 domain-containing protein At3g28853, found in Arabidopsis thaliana (Mouse-ear cress).